A 247-amino-acid chain; its full sequence is RNA-free ribonuclease P (247 aa).

Belongs to the HARP family.

It catalyses the reaction Endonucleolytic cleavage of RNA, removing 5'-extranucleotides from tRNA precursor.. RNA-free RNase P that catalyzes the removal of the 5'-leader sequence from pre-tRNA to produce the mature 5'-terminus. The chain is RNA-free ribonuclease P from Methanosarcina mazei (strain ATCC BAA-159 / DSM 3647 / Goe1 / Go1 / JCM 11833 / OCM 88) (Methanosarcina frisia).